The chain runs to 262 residues: S-methyl-5'-thioadenosine phosphorylase (262 aa).

Phosphate contacts are provided by residues S12, 54–55 (RH), and 87–88 (SA). A substrate-binding site is contributed by M185. T186 contributes to the phosphate binding site. Position 209 to 211 (209 to 211 (DYD)) interacts with substrate.

This sequence belongs to the PNP/MTAP phosphorylase family. MTAP subfamily. In terms of assembly, homohexamer. Dimer of a homotrimer.

The catalysed reaction is S-methyl-5'-thioadenosine + phosphate = 5-(methylsulfanyl)-alpha-D-ribose 1-phosphate + adenine. Its pathway is amino-acid biosynthesis; L-methionine biosynthesis via salvage pathway; S-methyl-5-thio-alpha-D-ribose 1-phosphate from S-methyl-5'-thioadenosine (phosphorylase route): step 1/1. Its function is as follows. Catalyzes the reversible phosphorylation of S-methyl-5'-thioadenosine (MTA) to adenine and 5-methylthioribose-1-phosphate. Involved in the breakdown of MTA, a major by-product of polyamine biosynthesis. Responsible for the first step in the methionine salvage pathway after MTA has been generated from S-adenosylmethionine. Has broad substrate specificity with 6-aminopurine nucleosides as preferred substrates. This chain is S-methyl-5'-thioadenosine phosphorylase, found in Thermofilum pendens (strain DSM 2475 / Hrk 5).